The primary structure comprises 317 residues: Melanocyte-stimulating hormone receptor (317 aa).

Topologically, residues 1 to 37 (MAVQGSQRRLLGSLNSTPTAIPQLGLAANQTGAWCLE) are extracellular. The N-linked (GlcNAc...) asparagine glycan is linked to asparagine 29. A helical membrane pass occupies residues 38–63 (VSIPDGLFLSLGLVSLVENVLVVATI). Over 64-72 (AKNRNLHSP) the chain is Cytoplasmic. Residues 73-93 (MYCFICCLALSDLLVSGGNVL) traverse the membrane as a helical segment. The Extracellular portion of the chain corresponds to 94–118 (ETAVILLLEAGALAARAAVVQQLDN). Residues 119–140 (VIDVITCSSMLSSLCFLGAIAV) form a helical membrane-spanning segment. The Cytoplasmic segment spans residues 141–163 (DRYISIFYALRYHSIVTLPRARR). Residues 164–183 (AIAAIWVASVLFSTLFIAYY) traverse the membrane as a helical segment. Topologically, residues 184-191 (DHAAVLLC) are extracellular. The chain crosses the membrane as a helical span at residues 192 to 211 (LVVFFLAMLVLMAVLYVHML). The Cytoplasmic portion of the chain corresponds to 212–240 (ARACQHAQGIARLHKRQRPVHQGFGLKGA). The chain crosses the membrane as a helical span at residues 241 to 266 (VTLTILLGIFFLCWGPFFLHLTLIVL). The Extracellular segment spans residues 267-279 (CPQHPTCSCIFKN). The helical transmembrane segment at 280–300 (FNLFLALIICNAIIDPLIYAF) threads the bilayer. Residues 301–317 (RSQELRRTLKEVLTCSW) lie on the Cytoplasmic side of the membrane. The S-palmitoyl cysteine moiety is linked to residue cysteine 315.

Belongs to the G-protein coupled receptor 1 family. Interacts with MGRN1, but does not undergo MGRN1-mediated ubiquitination; this interaction competes with GNAS-binding and thus inhibits agonist-induced cAMP production. Interacts with OPN3; the interaction results in a decrease in MC1R-mediated cAMP signaling and ultimately a decrease in melanin production in melanocytes.

The protein localises to the cell membrane. Its function is as follows. Receptor for MSH (alpha, beta and gamma) and ACTH. The activity of this receptor is mediated by G proteins which activate adenylate cyclase. Mediates melanogenesis, the production of eumelanin (black/brown) and phaeomelanin (red/yellow), via regulation of cAMP signaling in melanocytes. This is Melanocyte-stimulating hormone receptor (MC1R) from Pongo pygmaeus (Bornean orangutan).